The chain runs to 189 residues: Peptidyl-tRNA hydrolase (189 aa).

Y15 provides a ligand contact to tRNA. H20 acts as the Proton acceptor in catalysis. Residues F66, N68, and N114 each contribute to the tRNA site.

The protein belongs to the PTH family. In terms of assembly, monomer.

The protein localises to the cytoplasm. It carries out the reaction an N-acyl-L-alpha-aminoacyl-tRNA + H2O = an N-acyl-L-amino acid + a tRNA + H(+). In terms of biological role, hydrolyzes ribosome-free peptidyl-tRNAs (with 1 or more amino acids incorporated), which drop off the ribosome during protein synthesis, or as a result of ribosome stalling. Its function is as follows. Catalyzes the release of premature peptidyl moieties from peptidyl-tRNA molecules trapped in stalled 50S ribosomal subunits, and thus maintains levels of free tRNAs and 50S ribosomes. This is Peptidyl-tRNA hydrolase from Streptococcus pneumoniae (strain CGSP14).